Reading from the N-terminus, the 219-residue chain is Glutathione S-transferase (219 aa).

Positions 2-89 constitute a GST N-terminal domain; it reads SQPILGYWDI…YLGRKYKLNG (88 aa). Glutathione is bound by residues 8-9, 44-47, Lys-51, 60-61, and 73-74; these read YW, RSEW, NL, and QT. The 117-residue stretch at 91 to 207 folds into the GST C-terminal domain; it reads NDHEEIRISM…YIKKQQPKTF (117 aa). Tyr-117 contributes to the substrate binding site.

Belongs to the GST superfamily. Mu family. In terms of assembly, homodimer.

It is found in the cytoplasm. The catalysed reaction is RX + glutathione = an S-substituted glutathione + a halide anion + H(+). The sequence is that of Glutathione S-transferase from Dermatophagoides pteronyssinus (European house dust mite).